Consider the following 636-residue polypeptide: C-terminal binding protein AN (636 aa).

Residues 1 to 21 are disordered; sequence MSKIRSSATMPHRDQPSPASP. NAD(+) contacts are provided by residues S91, 147-148, 169-174, D193, 231-237, 258-260, D284, and 307-311; these read WL, VGRSVS, CALTNDT, TGS, and RSADY. Residues 341 to 489 form a disordered region; it reads VSDEEVEESE…PLEVMQESSP (149 aa). Residues 342 to 357 show a composition bias toward acidic residues; it reads SDEEVEESEASEEEEQ. Polar residues predominate over residues 369–384; it reads ESTSRQQGESTLTSTE. The span at 385-395 shows a compositional bias: basic and acidic residues; that stretch reads IVRREASELKE. Positions 398-409 are enriched in polar residues; the sequence is SPGQQHVSQNTA. Over residues 417-429 the composition is skewed to basic residues; the sequence is SRSGKKAKKRHSQ. Residues 430–445 show a composition bias toward polar residues; the sequence is QKYMQKTDGSSGLNEE. Basic and acidic residues predominate over residues 470 to 480; that stretch reads SPEDSRSRKTP.

The protein belongs to the D-isomer specific 2-hydroxyacid dehydrogenase family. Plant AN subfamily. In terms of assembly, homodimer. Interacts with KCBP and SUB (via intra-cellular domain); AN is not required for the correct subcellular localization and recycling of SUB. Binds to SOKs proteins polymers (e.g. SOK1, SOK2, SOK3 and SOK4). Interacts with IPGA1 on microtubule upon mechanical stress to regulate microtubule organization. Requires NAD(+) as cofactor. Expressed in cotyledons, leaves, roots, stems and floral buds.

The protein localises to the cytoplasm. It localises to the golgi apparatus. The protein resides in the trans-Golgi network. It is found in the cytoskeleton. In terms of biological role, involved in controlling the equilibrium between tubular and stacked structures in the Golgi complex. Required for cortical microtubules (MTs) arrangement that confers cell shape. Cooperatively with IPGA1, negatively regulates cortical microtubules (CMTs) organization in response to mechanical stress and modulates pavement cells morphogenesis leading to puzzle shape, probably in an AAA1/KTN1-dependent manner. Regulates the width of leaves by controlling the polar elongation of leaf cells. Involved in the regulation of trichome branching. Seems to not be able to regulate gene transcription. Regulates epidermal cell divisions and elongation in a non-cell-autonomous manner (regulated by subepidermal cells), but regulates epidermal cell polarity, shape, trichome branching and elongation in a cell-autonomous manner. Negatively regulates growth in the petiole elongation. Prevents lipid peroxidation as a result of abiotic stress response. Is involved in the SUB-dependent signaling mechanism and may act in a membrane trafficking event around the trans-Golgi network. The chain is C-terminal binding protein AN from Arabidopsis thaliana (Mouse-ear cress).